The following is a 222-amino-acid chain: Flagellar L-ring protein (222 aa).

The N-terminal stretch at 1-21 is a signal peptide; the sequence is MQTFLYPRTWLILGLLLLGSG. C22 carries N-palmitoyl cysteine lipidation. C22 is lipidated: S-diacylglycerol cysteine.

This sequence belongs to the FlgH family. In terms of assembly, the basal body constitutes a major portion of the flagellar organelle and consists of four rings (L,P,S, and M) mounted on a central rod.

Its subcellular location is the cell outer membrane. The protein localises to the bacterial flagellum basal body. Functionally, assembles around the rod to form the L-ring and probably protects the motor/basal body from shearing forces during rotation. The sequence is that of Flagellar L-ring protein from Methylobacillus flagellatus (strain ATCC 51484 / DSM 6875 / VKM B-1610 / KT).